The chain runs to 264 residues: Thymidylate synthase (264 aa).

Residue R21 participates in dUMP binding. H51 serves as a coordination point for (6R)-5,10-methylene-5,6,7,8-tetrahydrofolate. Position 126 to 127 (126 to 127 (RR)) interacts with dUMP. The active-site Nucleophile is C146. Residues 166–169 (RSAD), N177, and 207–209 (HLY) contribute to the dUMP site. D169 contributes to the (6R)-5,10-methylene-5,6,7,8-tetrahydrofolate binding site. A263 provides a ligand contact to (6R)-5,10-methylene-5,6,7,8-tetrahydrofolate.

This sequence belongs to the thymidylate synthase family. Bacterial-type ThyA subfamily. Homodimer.

It localises to the cytoplasm. The catalysed reaction is dUMP + (6R)-5,10-methylene-5,6,7,8-tetrahydrofolate = 7,8-dihydrofolate + dTMP. It participates in pyrimidine metabolism; dTTP biosynthesis. Its function is as follows. Catalyzes the reductive methylation of 2'-deoxyuridine-5'-monophosphate (dUMP) to 2'-deoxythymidine-5'-monophosphate (dTMP) while utilizing 5,10-methylenetetrahydrofolate (mTHF) as the methyl donor and reductant in the reaction, yielding dihydrofolate (DHF) as a by-product. This enzymatic reaction provides an intracellular de novo source of dTMP, an essential precursor for DNA biosynthesis. The protein is Thymidylate synthase of Methylorubrum extorquens (strain CM4 / NCIMB 13688) (Methylobacterium extorquens).